We begin with the raw amino-acid sequence, 718 residues long: Sodium/myo-inositol cotransporter (718 aa).

Over 1-9 (MRAVLDTAD) the chain is Extracellular. A helical transmembrane segment spans residues 10-29 (IAIVALYFILVMCIGFFAMW). Topologically, residues 30-38 (KSNRSTVSG) are cytoplasmic. Residues 39 to 57 (YFLAGRSMTWVAIGASLFV) traverse the membrane as a helical segment. Over 58-86 (SNIGSEHFIGLAGSGAASGFAVGAWEFNA) the chain is Extracellular. A helical transmembrane segment spans residues 87–110 (LLLLQLLGWVFIPIYIRSGVYTMP). Residues 111–123 (EYLSKRFGGHRIQ) lie on the Cytoplasmic side of the membrane. A helical transmembrane segment spans residues 124–144 (VYFAALSLILYIFTKLSVDLY). Residues 145–157 (SGALFIQESLGWN) lie on the Extracellular side of the membrane. The helical transmembrane segment at 158-183 (LYVSVILLIGMTALLTVTGGLVAVIY) threads the bilayer. The Cytoplasmic segment spans residues 184-186 (TDT). Residues 187–205 (LQALLMIIGALTLMIISIM) form a helical membrane-spanning segment. The Extracellular segment spans residues 206–303 (EIGGFEEVKR…HAKGSTLMAG (98 aa)). Asn-232 is a glycosylation site (N-linked (GlcNAc...) asparagine). Residues 304-324 (FLKLLPMFIIVVPGMISRILF) form a helical membrane-spanning segment. The Cytoplasmic segment spans residues 325–353 (TDDIACINPEHCMLVCGSRAGCSNIAYPR). The chain crosses the membrane as a helical span at residues 354–376 (LVMKLVPVGLRGLMMAVMIAALM). At 377–406 (SDLDSIFNSASTIFTLDVYKLIRKSASSRE) the chain is on the extracellular side. A helical transmembrane segment spans residues 407-430 (LMIVGRIFVAFMVVISIAWVPIIV). Residues 431-443 (EMQGGQMYLYIQE) lie on the Cytoplasmic side of the membrane. A helical transmembrane segment spans residues 444 to 462 (VADYLTPPVAALFLLAIFW). The Extracellular portion of the chain corresponds to 463-510 (KRCNEQGAFYGGMAGFVLGAVRLILAFAYRAPECDQPDNRPGFIKDIH). Residues 511 to 532 (YMYVATGLFWVTGLITVIVSLL) traverse the membrane as a helical segment. Residues 533–695 (TPPPTKEQIR…QMLEETRQVK (163 aa)) lie on the Cytoplasmic side of the membrane. Phosphoserine occurs at positions 594 and 632. Residues 696-716 (VILNIGLFAVCSLGIFMFVYF) traverse the membrane as a helical segment. Residues 717-718 (SL) are Extracellular-facing.

Belongs to the sodium:solute symporter (SSF) (TC 2.A.21) family. As to quaternary structure, interacts with KCNQ2 (via the pore module). Interacts with KCNQ1; this interaction is direct. Forms coregulatory complexes with ion channels KCNQ2-KCNQ3 and KCNQ1-KCNE2.

It is found in the apical cell membrane. The protein localises to the basolateral cell membrane. It catalyses the reaction myo-inositol(out) + 2 Na(+)(out) = myo-inositol(in) + 2 Na(+)(in). It carries out the reaction scyllo-inositol(out) + 2 Na(+)(out) = scyllo-inositol(in) + 2 Na(+)(in). Functionally, electrogenic Na(+)-coupled sugar symporter that actively transports myo-inositol and its stereoisomer scyllo-inositol across the plasma membrane, with a Na(+) to sugar coupling ratio of 2:1. Maintains myo-inositol concentration gradient that defines cell volume and fluid balance during osmotic stress, in particular in the fetoplacental unit and central nervous system. Forms coregulatory complexes with voltage-gated K(+) ion channels, allosterically altering ion selectivity, voltage dependence and gating kinetics of the channel. In turn, K(+) efflux through the channel forms a local electrical gradient that modulates electrogenic Na(+)-coupled myo-inositol influx through the transporter. Associates with KCNQ1-KCNE2 channel in the apical membrane of choroid plexus epithelium and regulates the myo-inositol gradient between blood and cerebrospinal fluid with an impact on neuron excitability. Associates with KCNQ2-KCNQ3 channel altering ion selectivity, increasing Na(+) and Cs(+) permeation relative to K(+) permeation. Provides myo-inositol precursor for biosynthesis of phosphoinositides such as PI(4,5)P2, thus indirectly affecting the activity of phosphoinositide-dependent ion channels and Ca(2+) signaling upon osmotic stress. The sequence is that of Sodium/myo-inositol cotransporter from Homo sapiens (Human).